The chain runs to 213 residues: CDP-diacylglycerol--inositol 3-phosphatidyltransferase (213 aa).

Over methionine 1 to asparagine 5 the chain is Cytoplasmic. Residues isoleucine 6 to phenylalanine 26 traverse the membrane as a helical segment. Tyrosine 27 is a topological domain (lumenal). The helical transmembrane segment at phenylalanine 28–alanine 48 threads the bilayer. Residues aspartate 47 and aspartate 50 each contribute to the Mg(2+) site. Residues phenylalanine 49–arginine 73 lie on the Cytoplasmic side of the membrane. Residues glycine 51, arginine 55, and threonine 61 each contribute to the a CDP-1,2-diacyl-sn-glycerol site. 2 residues coordinate Mg(2+): aspartate 68 and aspartate 72. Aspartate 72 acts as the Proton acceptor in catalysis. A helical transmembrane segment spans residues cysteine 74–phenylalanine 94. Position 95 (glutamine 95) is a topological domain, lumenal. A helical membrane pass occupies residues leucine 96 to glycine 116. At serine 117–proline 139 the chain is on the cytoplasmic side. A helical transmembrane segment spans residues alanine 140–phenylalanine 160. Over serine 161–methionine 174 the chain is Lumenal. The chain crosses the membrane as a helical span at residues glycine 175 to isoleucine 195. Residues threonine 196–lysine 213 lie on the Cytoplasmic side of the membrane.

It belongs to the CDP-alcohol phosphatidyltransferase class-I family. Mn(2+) serves as cofactor. The cofactor is Mg(2+).

The protein localises to the endoplasmic reticulum membrane. The protein resides in the cell membrane. The catalysed reaction is a CDP-1,2-diacyl-sn-glycerol + myo-inositol = a 1,2-diacyl-sn-glycero-3-phospho-(1D-myo-inositol) + CMP + H(+). In terms of biological role, catalyzes the biosynthesis of phosphatidylinositol (PtdIns) as well as PtdIns:inositol exchange reaction. May thus act to reduce an excessive cellular PtdIns content. The exchange activity is due to the reverse reaction of PtdIns synthase and is dependent on CMP, which is tightly bound to the enzyme. This is CDP-diacylglycerol--inositol 3-phosphatidyltransferase from Mus musculus (Mouse).